A 200-amino-acid chain; its full sequence is Elongation factor Ts (200 aa).

The involved in Mg(2+) ion dislocation from EF-Tu stretch occupies residues 82–85; it reads TDFV.

It belongs to the EF-Ts family.

The protein localises to the cytoplasm. Functionally, associates with the EF-Tu.GDP complex and induces the exchange of GDP to GTP. It remains bound to the aminoacyl-tRNA.EF-Tu.GTP complex up to the GTP hydrolysis stage on the ribosome. This chain is Elongation factor Ts, found in Solidesulfovibrio magneticus (strain ATCC 700980 / DSM 13731 / RS-1) (Desulfovibrio magneticus).